Here is an 81-residue protein sequence, read N- to C-terminus: Sulfur carrier protein TusA (81 aa).

C19 acts as the Cysteine persulfide intermediate in catalysis.

It belongs to the sulfur carrier protein TusA family.

The protein resides in the cytoplasm. In terms of biological role, sulfur carrier protein which probably makes part of a sulfur-relay system. The chain is Sulfur carrier protein TusA from Aeromonas salmonicida (strain A449).